We begin with the raw amino-acid sequence, 346 residues long: Queuosine 5'-phosphate N-glycosylase/hydrolase (346 aa).

5 residues coordinate queuine: His49, Phe243, Asp245, Asp310, and Asp315. Asp245 serves as the catalytic Nucleophile or transition state stabilizer.

It belongs to the QNG1 protein family.

The catalysed reaction is queuosine 5'-phosphate + H2O = queuine + D-ribose 5-phosphate. Catalyzes the hydrolysis of queuosine 5'-phosphate, releasing the nucleobase queuine (q). Is required for salvage of queuine from exogenous queuosine (Q) that is imported and then converted to queuosine 5'-phosphate intracellularly. This Schizosaccharomyces pombe (strain 972 / ATCC 24843) (Fission yeast) protein is Queuosine 5'-phosphate N-glycosylase/hydrolase.